The following is a 518-amino-acid chain: Glucose-6-phosphate 1-dehydrogenase (518 aa).

NADP(+) is bound by residues 36 to 43, arginine 70, and lysine 169; that span reads GASGDLAK. Residues lysine 169, 199–203, glutamate 237, and aspartate 256 each bind D-glucose 6-phosphate; that span reads HYLGK. Histidine 261 (proton acceptor) is an active-site residue. Arginine 356 is an NADP(+) binding site. Residues lysine 359 and arginine 364 each coordinate D-glucose 6-phosphate. Positions 365, 369, and 392 each coordinate NADP(+). Glutamine 394 is a D-glucose 6-phosphate binding site. Residues 400 to 402, 420 to 422, arginine 486, tyrosine 502, and tryptophan 508 contribute to the NADP(+) site; these read YFK and DLT.

This sequence belongs to the glucose-6-phosphate dehydrogenase family.

It localises to the cytoplasm. The protein localises to the cytosol. The enzyme catalyses D-glucose 6-phosphate + NADP(+) = 6-phospho-D-glucono-1,5-lactone + NADPH + H(+). It participates in carbohydrate degradation; pentose phosphate pathway; D-ribulose 5-phosphate from D-glucose 6-phosphate (oxidative stage): step 1/3. Functionally, cytosolic glucose-6-phosphate dehydrogenase that catalyzes the first and rate-limiting step of the oxidative branch within the pentose phosphate pathway/shunt, an alternative route to glycolysis for the dissimilation of carbohydrates and a major source of reducing power and metabolic intermediates for fatty acid and nucleic acid biosynthetic processes. The polypeptide is Glucose-6-phosphate 1-dehydrogenase (Zw) (Drosophila yakuba (Fruit fly)).